A 379-amino-acid polypeptide reads, in one-letter code: MNKPLRIKHPMIKIINNSLNDLPAPTNISMWWNLGSLLGMCLMIQIVTGLFLTMHYTPNIEMAFSSVVHICRDVNNGWLIRTLHANGASMFFICMYLHVGRGIYYGSYMYMNTWMTGTIILFLVMATAFMGYVLPWGQMSFWGATVITNLLSAIPYIGTDIVQWVWGGFAVDNATLNRFYTFHFVLPFIVMAMVMIHLFFLHQTGSNNPIGLNSNIDKIPFHPYFTYKDMITFIILMMILIMLCLIDPYMLGDPDNFVPANPLVTPIHIQPEWYFLFAYAILRSIPNKLGGVIALVMSISILMIMPFYNKTKFRGNQFYPMNQIMFWIMVIVICLLTWIGKRPVEEPYIMTGQILTIIYFSYFLFNVHIAKMWDTLIKT.

The next 4 helical transmembrane spans lie at 34 to 54 (LGSL…FLTM), 78 to 99 (WLIR…YLHV), 114 to 134 (WMTG…GYVL), and 179 to 199 (FYTF…IHLF). The heme b site is built by H84 and H98. Heme b is bound by residues H183 and H197. Residue H202 coordinates a ubiquinone. 4 helical membrane-spanning segments follow: residues 227–247 (YKDM…CLID), 289–309 (LGGV…PFYN), 321–341 (MNQI…WIGK), and 348–368 (YIMT…FNVH).

Belongs to the cytochrome b family. As to quaternary structure, the main subunits of complex b-c1 are: cytochrome b, cytochrome c1 and the Rieske protein. Heme b is required as a cofactor.

It is found in the mitochondrion inner membrane. Functionally, component of the ubiquinol-cytochrome c reductase complex (complex III or cytochrome b-c1 complex) that is part of the mitochondrial respiratory chain. The b-c1 complex mediates electron transfer from ubiquinol to cytochrome c. Contributes to the generation of a proton gradient across the mitochondrial membrane that is then used for ATP synthesis. The polypeptide is Cytochrome b (MT-CYB) (Locusta migratoria (Migratory locust)).